The chain runs to 426 residues: MTKALNGVRILDFTHVQSGPTCTQLLAWFGADVIKVERPGVGDITRGQLQDIPNVDSLYFTMLNHNKRSITLDTKNPKGKEVLTALIKSCDVLVENFGPGVLDRMGFSWEKIQSLNPKMIVASIKGFGPGPYEDCKVYENVAQCTGGAASTTGFRDGLPLVTGAQIGDSGTGLHLALGIVTALYQRTVTGRGQKVTAAMQDGVLNLSRVKLRDQQRLAHGPLKEYSQFGEGIPFGDAVPRAGNDSGGGQPGRILKCKGWETDPNAYIYFITQAPVWEKICDVIGEPDWKTHPDYAKPAARLKHLNDIFARIEQWTMTKTKFEAMDILNKDDIPCGPILSMKELAEDQSLRATGTVVEVDHPTRGKYLSVGNPIKMSDSPTEVMRSPLLGEHTDEILRQVLGFSDQQVAEVHDSGALEPPRKAAAAE.

CoA-binding positions include 17 to 18 (QS), Arg-38, 72 to 75 (LDTK), 96 to 98 (NFG), Arg-104, and 136 to 139 (KVYE). The active-site Nucleophile is Asp-168. 247–249 (GGQ) lines the substrate pocket.

The protein belongs to the CoA-transferase III family. Frc subfamily. Homodimer.

It carries out the reaction formyl-CoA + oxalate = oxalyl-CoA + formate. Its pathway is metabolic intermediate degradation; oxalate degradation; CO(2) and formate from oxalate: step 1/2. In terms of biological role, involved in the catabolism of oxalate and in the adapatation to low pH via the induction of the oxalate-dependent acid tolerance response (ATR). Catalyzes the transfer of the CoA moiety from formyl-CoA to oxalate. The polypeptide is Formyl-CoA:oxalate CoA-transferase (Rhodopseudomonas palustris (strain BisB18)).